The primary structure comprises 362 residues: 2-oxoglutarate-dependent dioxygenase lolO2 (362 aa).

A Fe2OG dioxygenase domain is found at 199 to 312 (TWNYFLGQPV…RYSLVFFGHL (114 aa)). 3 residues coordinate Fe cation: His222, Asp224, and His280. Residue Arg303 participates in 2-oxoglutarate binding.

Belongs to the iron/ascorbate-dependent oxidoreductase family. The cofactor is Fe(2+).

Its pathway is alkaloid biosynthesis. 2-oxoglutarate-dependent dioxygenase; part of the gene cluster that mediates the biosynthesis of loline alkaloids, potent insecticidal agents composed of a pyrrolizidine ring system and an uncommon ether bridge linking carbons 2 and 7. Lolines are structurally differentiated by the various modifications of the L-amino group and include norloline, loline, N-methylloline, N-acetylloline, N-acetylnorloline, and N-formylloline. The first committed step is the condensation of O-acetyl-L-homoserine (derived from L-aspartic acid) and L-proline, probably catalyzed by the gamma-type pyridoxal 5'-phosphate(PLP)-dependent enzyme lolC, to give the diamino diacid, NACPP. Ensuing cyclization, decarboxylation, and acetylation steps yield 1-exo-acetamidopyrrolizidine (AcAP). LolO is required for installation of the ether bridge upon the pathway intermediate, 1-exo-acetamidopyrrolizidine (AcAP). In sequential 2-oxoglutarate- and O(2)-consuming steps, lolO removes hydrogens from C2 and C7 of AcAP to form both carbon-oxygen bonds in N-acetylnorloline (NANL), the precursor to all other lolines. The enzymes lolD, lolE, lolF and lolT have also been proposed to be involved in the ether-bridge installation. Further processing of the exocyclic moiety of NANL by fungal N-acetamidase (LolN), methyltransferase (LolM), and cytochrome P450 (LolP) enzymes, with occasional involvement of a plant acetyltransferase, generates the other known lolines. LolN transforms NANL to norlonine which is monomethylated and dimethylated to respectively lonine and N-methyllonine (NML) by lolM. LolP catalyzes hydroxylation of the methyl group in N-methylloline (NML) and further oxygenation to N-formylloline (NFL). A plant acetyltransferase is responsible for the acetylation of loline to form N-acetylloline (NAL). LolA might interact with aspartate kinase to prevent feedback inhibition of its activity by these end products and thereby promote production of L-homoserine from L-aspartate. The chain is 2-oxoglutarate-dependent dioxygenase lolO2 from Epichloe uncinata (Endophyte fungus).